A 355-amino-acid chain; its full sequence is Nuclear hormone receptor family member nhr-127 (355 aa).

The nuclear receptor DNA-binding region spans 10-86 (SIPCEVCKNQ…AGMKAEKIQK (77 aa)). 2 consecutive NR C4-type zinc fingers follow at residues 13-33 (CEVC…CGAC) and 49-69 (CKDG…CRYC). An NR LBD domain is found at 126-355 (NPHNASEGCS…IVQIVQNNFY (230 aa)).

It belongs to the nuclear hormone receptor family.

The protein localises to the nucleus. In terms of biological role, orphan nuclear receptor. May play a role in modulation of lifespan and immunity. The chain is Nuclear hormone receptor family member nhr-127 (nhr-127) from Caenorhabditis elegans.